Consider the following 276-residue polypeptide: MANISIADIKALREQLGTGMVDTKKALEEAGGDLEKATEILRLKGAKGNAKRADRSTSEGLVAAKENANGTATMIELACETDFVAKGEKFVALSDTVLDAIAAAGSTTIEEALAAPAGSQTVAEFIGDEAAILGEKIELRRVAVVNGEHVAIYLHKTSKDLPPQVGVVVGYAGDDTETARSIAQHISFANPAHLTREDVPAEEVESERRIVKEISRSEGKPEAALPKIIEGRLGAFFKQVALLEQEYARDNKLTISQVLKDSGLTVSGFARFKVGA.

Residues 81–84 are involved in Mg(2+) ion dislocation from EF-Tu; sequence TDFV.

Belongs to the EF-Ts family.

The protein resides in the cytoplasm. Associates with the EF-Tu.GDP complex and induces the exchange of GDP to GTP. It remains bound to the aminoacyl-tRNA.EF-Tu.GTP complex up to the GTP hydrolysis stage on the ribosome. The polypeptide is Elongation factor Ts (Leifsonia xyli subsp. xyli (strain CTCB07)).